A 323-amino-acid polypeptide reads, in one-letter code: 8-oxo-dGDP phosphatase NUDT18 (323 aa).

The region spanning 37–167 (RLRKNVCYVV…DVLHLVELGA (131 aa)) is the Nudix hydrolase domain. A Mg(2+)-binding site is contributed by Leu-58. Residues 76–97 (GRMEPGETIVEAMQREVKEEAG) carry the Nudix box motif.

It belongs to the Nudix hydrolase family. The cofactor is Mn(2+). Mg(2+) serves as cofactor.

The catalysed reaction is 8-oxo-dGDP + H2O = 8-oxo-dGMP + phosphate + H(+). It catalyses the reaction 8-oxo-dADP + H2O = 8-oxo-dAMP + phosphate + H(+). It carries out the reaction 2-oxo-dADP + H2O = 2-oxo-dAMP + phosphate + H(+). The enzyme catalyses 8-oxo-GDP + H2O = 8-oxo-GMP + phosphate + H(+). Mediates the hydrolysis of oxidized nucleoside diphosphate derivatives. Hydrolyzes 8-oxo-7,8-dihydroguanine (8-oxo-Gua)-containing deoxyribo- and ribonucleoside diphosphates to the monophosphates. Hydrolyzes 8-oxo-dGDP and 8-oxo-GDP with the same efficiencies. Also hydrolyzes 8-OH-dADP and 2-OH-dADP. Exhibited no or minimal hydrolysis activity against 8-oxo-dGTP, 8-oxo-GTP, dGTP, GTP, dGDP and GDP. Probably removes oxidized guanine nucleotides from both the DNA and RNA precursor pools. This is 8-oxo-dGDP phosphatase NUDT18 from Mus musculus (Mouse).